A 248-amino-acid polypeptide reads, in one-letter code: Ribosomal RNA small subunit methyltransferase J (248 aa).

S-adenosyl-L-methionine contacts are provided by residues 101-102 (RD), 117-118 (ER), 153-154 (SS), and Asp171.

It belongs to the methyltransferase superfamily. RsmJ family.

It localises to the cytoplasm. The catalysed reaction is guanosine(1516) in 16S rRNA + S-adenosyl-L-methionine = N(2)-methylguanosine(1516) in 16S rRNA + S-adenosyl-L-homocysteine + H(+). Specifically methylates the guanosine in position 1516 of 16S rRNA. The chain is Ribosomal RNA small subunit methyltransferase J from Pectobacterium atrosepticum (strain SCRI 1043 / ATCC BAA-672) (Erwinia carotovora subsp. atroseptica).